We begin with the raw amino-acid sequence, 398 residues long: Probable aminomethyltransferase (398 aa).

The protein belongs to the GcvT family. In terms of assembly, the glycine cleavage system is composed of four proteins: P, T, L and H.

It catalyses the reaction N(6)-[(R)-S(8)-aminomethyldihydrolipoyl]-L-lysyl-[protein] + (6S)-5,6,7,8-tetrahydrofolate = N(6)-[(R)-dihydrolipoyl]-L-lysyl-[protein] + (6R)-5,10-methylene-5,6,7,8-tetrahydrofolate + NH4(+). Functionally, the glycine cleavage system catalyzes the degradation of glycine. This is Probable aminomethyltransferase from Thermococcus kodakarensis (strain ATCC BAA-918 / JCM 12380 / KOD1) (Pyrococcus kodakaraensis (strain KOD1)).